Consider the following 570-residue polypeptide: Protein mom-5 (570 aa).

An N-terminal signal peptide occupies residues Met-1–Ala-16. Residues Asp-17–Arg-230 are Extracellular-facing. The FZ domain maps to Ser-32–Lys-148. Cystine bridges form between Cys-37–Cys-98, Cys-45–Cys-91, Cys-82–Cys-119, Cys-108–Cys-145, and Cys-112–Cys-136. The N-linked (GlcNAc...) asparagine glycan is linked to Asn-51. Asn-149 carries an N-linked (GlcNAc...) asparagine glycan. A helical membrane pass occupies residues Ile-231 to Phe-251. Residues Leu-252 to Pro-264 lie on the Cytoplasmic side of the membrane. Residues Ile-265–Gly-285 form a helical membrane-spanning segment. The Extracellular portion of the chain corresponds to Glu-286–Tyr-319. A helical membrane pass occupies residues Phe-320 to Ala-340. The Cytoplasmic portion of the chain corresponds to Asn-341–Ser-348. A helical transmembrane segment spans residues Ile-349 to Val-369. The Extracellular segment spans residues Thr-370–Ala-395. A helical membrane pass occupies residues Leu-396–Val-416. Over Cys-417–Arg-449 the chain is Cytoplasmic. A helical transmembrane segment spans residues Ile-450 to Tyr-470. Residues Gln-471–Glu-515 lie on the Extracellular side of the membrane. The chain crosses the membrane as a helical span at residues Ile-516–Trp-536. The Cytoplasmic portion of the chain corresponds to Val-537 to Arg-570.

Belongs to the G-protein coupled receptor Fz/Smo family.

It localises to the cell membrane. The protein localises to the early endosome. Its function is as follows. Receptor for Wnt proteins. Most frizzled receptors are coupled to the beta-catenin canonical signaling pathway, which leads to the activation of disheveled proteins, inhibition of gsk-3 kinase, nuclear accumulation of beta-catenin and activation of Wnt target genes. A second signaling pathway involving PKC and calcium fluxes has been seen for some family members, but it is not yet clear if it represents a distinct pathway or if it can be integrated in the canonical pathway, as pkc seems to be required for Wnt-mediated inactivation of gsk-3 kinase. Both pathways seem to involve interactions with G-proteins. Required in embryonic development for the correct positioning and orientation of the mitotic spindles and division planes in blastomere cells. During early embryonic cell divisions, directs the asymmetric positioning of transcription factors such as pop-1 and dsh-2 in daughter cells in order to determine cell fate specification. Acts redundantly with other Wnt receptors such as lin-17 to control vulval precursor cell specification and also the polarity of different cell types including distal tip cells, seam cells, AVG interneurons and P-cells and their descendants. Plays a role in the migration of cell types including distal tip cells and the QR neuroblast descendants, QR.p and QR.pa during larval development. Negatively regulates the unc-6/Netrin receptors unc-5 and unc-40 to control distal tip cell polarity and migration. Acts through ced-5/DOCK180 and ced-10/Rac to control both distal tip cell migration and the phagocytic clearance of apoptotic cell corpses. Furthermore, it is also required for the migration and axon guidance of the different neuronal cell types including CAN, ALM, HSN and the two mechanosensory neurons AVM and PVM. Mediates Wnt receptor cfz-2 in directing ALM migration, but may also act redundantly with the Wnt receptors cfz-2 and mig-1 to direct the migration of other neuronal cell types including CAN and HSN. Mediates Wnt ligand egl-20 in the control of the anterior-posterior axon guidance of AVM and PVM neurons. This is Protein mom-5 from Caenorhabditis elegans.